The sequence spans 306 residues: Recombination-associated protein RdgC (306 aa).

Belongs to the RdgC family.

Its subcellular location is the cytoplasm. It is found in the nucleoid. In terms of biological role, may be involved in recombination. The polypeptide is Recombination-associated protein RdgC (Pseudomonas syringae pv. tomato (strain ATCC BAA-871 / DC3000)).